Reading from the N-terminus, the 157-residue chain is Ribonuclease H (157 aa).

Positions 3-144 (NSKTVHLYTD…CDELARDAAT (142 aa)) constitute an RNase H type-1 domain. Positions 12, 50, 72, and 136 each coordinate Mg(2+).

This sequence belongs to the RNase H family. In terms of assembly, monomer. Requires Mg(2+) as cofactor.

The protein localises to the cytoplasm. The catalysed reaction is Endonucleolytic cleavage to 5'-phosphomonoester.. In terms of biological role, endonuclease that specifically degrades the RNA of RNA-DNA hybrids. This is Ribonuclease H from Idiomarina loihiensis (strain ATCC BAA-735 / DSM 15497 / L2-TR).